The chain runs to 427 residues: Trigger factor (427 aa).

The 86-residue stretch at Gly163 to Pro248 folds into the PPIase FKBP-type domain.

Belongs to the FKBP-type PPIase family. Tig subfamily.

The protein localises to the cytoplasm. It catalyses the reaction [protein]-peptidylproline (omega=180) = [protein]-peptidylproline (omega=0). Its function is as follows. Involved in protein export. Acts as a chaperone by maintaining the newly synthesized protein in an open conformation. Functions as a peptidyl-prolyl cis-trans isomerase. This is Trigger factor from Streptococcus gordonii (strain Challis / ATCC 35105 / BCRC 15272 / CH1 / DL1 / V288).